The chain runs to 194 residues: Peptidyl-tRNA hydrolase (194 aa).

Y17 contacts tRNA. H22 serves as the catalytic Proton acceptor. 3 residues coordinate tRNA: Y68, N70, and N116.

This sequence belongs to the PTH family. Monomer.

The protein localises to the cytoplasm. It carries out the reaction an N-acyl-L-alpha-aminoacyl-tRNA + H2O = an N-acyl-L-amino acid + a tRNA + H(+). Hydrolyzes ribosome-free peptidyl-tRNAs (with 1 or more amino acids incorporated), which drop off the ribosome during protein synthesis, or as a result of ribosome stalling. Its function is as follows. Catalyzes the release of premature peptidyl moieties from peptidyl-tRNA molecules trapped in stalled 50S ribosomal subunits, and thus maintains levels of free tRNAs and 50S ribosomes. In Pseudomonas aeruginosa (strain LESB58), this protein is Peptidyl-tRNA hydrolase.